The primary structure comprises 406 residues: Argininosuccinate synthase (406 aa).

ATP contacts are provided by residues 11–19 (AYSGGLDTS) and Ala38. Residues Tyr91 and Ser96 each coordinate L-citrulline. Gly121 contacts ATP. L-aspartate contacts are provided by Thr123, Asn127, and Asp128. Position 127 (Asn127) interacts with L-citrulline. Residues Arg131, Ser181, Ser190, Glu266, and Tyr278 each contribute to the L-citrulline site.

This sequence belongs to the argininosuccinate synthase family. Type 1 subfamily. As to quaternary structure, homotetramer.

Its subcellular location is the cytoplasm. It catalyses the reaction L-citrulline + L-aspartate + ATP = 2-(N(omega)-L-arginino)succinate + AMP + diphosphate + H(+). Its pathway is amino-acid biosynthesis; L-arginine biosynthesis; L-arginine from L-ornithine and carbamoyl phosphate: step 2/3. This chain is Argininosuccinate synthase, found in Campylobacter jejuni subsp. jejuni serotype O:6 (strain 81116 / NCTC 11828).